A 137-amino-acid polypeptide reads, in one-letter code: Small ribosomal subunit protein uS12 (137 aa).

Residues 1–57 (MPTINQLVRKPRKSKVEKSKSPALNVGYNSRKKVQTNVSSPQKRGVATRVGTMTPKK) form a disordered region. D102 bears the 3-methylthioaspartic acid mark.

Belongs to the universal ribosomal protein uS12 family. In terms of assembly, part of the 30S ribosomal subunit. Contacts proteins S8 and S17. May interact with IF1 in the 30S initiation complex.

With S4 and S5 plays an important role in translational accuracy. Functionally, interacts with and stabilizes bases of the 16S rRNA that are involved in tRNA selection in the A site and with the mRNA backbone. Located at the interface of the 30S and 50S subunits, it traverses the body of the 30S subunit contacting proteins on the other side and probably holding the rRNA structure together. The combined cluster of proteins S8, S12 and S17 appears to hold together the shoulder and platform of the 30S subunit. The polypeptide is Small ribosomal subunit protein uS12 (Streptococcus suis (strain 98HAH33)).